The primary structure comprises 406 residues: GTPase Obg (406 aa).

An Obg domain is found at 1 to 159; that stretch reads MKFVDEVSIH…RDLKLELKVL (159 aa). A disordered region spans residues 127 to 148; that stretch reads NTRFKSSTNRAPRQTTPGKPGE. A compositionally biased stretch (polar residues) spans 129 to 143; the sequence is RFKSSTNRAPRQTTP. In terms of domain architecture, OBG-type G spans 160 to 334; sequence ADVGLLGLPN…LSQDIMRYLD (175 aa). Residues 166–173, 191–195, 213–216, 283–286, and 315–317 contribute to the GTP site; these read GLPNAGKS, FTTLV, DIPG, NKMD, and SAL. Positions 173 and 193 each coordinate Mg(2+). Residues 378–406 form a disordered region; sequence GLKNAGAADDDDFDDEEDDGDGPEIFYVP. Residues 385–399 show a composition bias toward acidic residues; sequence ADDDDFDDEEDDGDG.

This sequence belongs to the TRAFAC class OBG-HflX-like GTPase superfamily. OBG GTPase family. In terms of assembly, monomer. It depends on Mg(2+) as a cofactor.

Its subcellular location is the cytoplasm. Functionally, an essential GTPase which binds GTP, GDP and possibly (p)ppGpp with moderate affinity, with high nucleotide exchange rates and a fairly low GTP hydrolysis rate. Plays a role in control of the cell cycle, stress response, ribosome biogenesis and in those bacteria that undergo differentiation, in morphogenesis control. The sequence is that of GTPase Obg from Pseudomonas paraeruginosa (strain DSM 24068 / PA7) (Pseudomonas aeruginosa (strain PA7)).